The primary structure comprises 166 residues: Transcriptional repressor NrdR (166 aa).

Residues 3-34 fold into a zinc finger; that stretch reads CPFCGHDDTQVKDSRSTEDGVAIRRRRVCSAC. An ATP-cone domain is found at 49 to 139; the sequence is LSVTKADGRR…VYRDFREVEA (91 aa). The disordered stretch occupies residues 146 to 166; sequence DMKPIPGETDTPSPDDSQETP.

This sequence belongs to the NrdR family. Zn(2+) serves as cofactor.

Functionally, negatively regulates transcription of bacterial ribonucleotide reductase nrd genes and operons by binding to NrdR-boxes. The sequence is that of Transcriptional repressor NrdR from Gluconobacter oxydans (strain 621H) (Gluconobacter suboxydans).